The following is a 1530-amino-acid chain: Multidrug resistance-associated protein 1 (1530 aa).

Residues 1-33 (MALRDFCSVDGSDLFWEWNVTWNTSNPDFTKCF) are Extracellular-facing. A glycan (N-linked (GlcNAc...) asparagine) is linked at N19. Residues 34–54 (QNTVLVWVPCSYLWVCFPFYF) traverse the membrane as a helical segment. At 55–74 (LYLSHHDRGYIQMTHLNKAK) the chain is on the cytoplasmic side. Residues 75-95 (TALGFLLWIVCWADLFYSFWE) form a helical membrane-spanning segment. The Extracellular segment spans residues 96–100 (RSMGK). Residues 101-121 (LLAPVFLVSPTLLGITMLLAT) traverse the membrane as a helical segment. Residues 122–133 (FLIQIERRRGVQ) lie on the Cytoplasmic side of the membrane. Residues 134 to 154 (SSGIMLTFWLIALLCALAILR) form a helical membrane-spanning segment. Topologically, residues 155-172 (SKIMTALKEDARVDVFRD) are extracellular. The chain crosses the membrane as a helical span at residues 173–193 (VTFYIYFSLVLIQLVLSCFSD). Residues 194–316 (RSPLFSETIN…KERDPSLFKV (123 aa)) lie on the Cytoplasmic side of the membrane. Residue Y277 is modified to Phosphotyrosine. The residue at position 289 (S289) is a Phosphoserine. A helical transmembrane segment spans residues 317–337 (LYKTFGPYFLMSFLFKAVHDL). The region spanning 325 to 608 (FLMSFLFKAV…LPMVISSIVQ (284 aa)) is the ABC transmembrane type-1 1 domain. Residues 338–363 (MMFAGPEILKLLINFVNDKKAPEWQG) lie on the Extracellular side of the membrane. A helical transmembrane segment spans residues 364–384 (YFYTALLFISACLQTLVLHQY). Over 385–440 (FHICFVSGMRIKTAVIGAVYRKALVITNAARKSSTVGEIVNLMSVDAQRFMDLATY) the chain is Cytoplasmic. A helical membrane pass occupies residues 441–461 (INMIWSAPLQVILALYLLWLN). The Extracellular segment spans residues 462–464 (LGP). Residues 465–485 (SVLAGVAVMVLMVPLNAVMAM) form a helical membrane-spanning segment. Topologically, residues 486–547 (KTKTYQVAHM…VLKKSAYLAA (62 aa)) are cytoplasmic. An N6-succinyllysine modification is found at K503. The chain crosses the membrane as a helical span at residues 548–568 (VGTFTWVCTPFLVALSTFAVY). Over 569–590 (VTVDENNILDAQKAFVSLALFN) the chain is Extracellular. The chain crosses the membrane as a helical span at residues 591-611 (ILRFPLNILPMVISSIVQASV). Over 612–966 (SLKRLRVFLS…VKLSVYWDYM (355 aa)) the chain is Cytoplasmic. An ABC transporter 1 domain is found at 644 to 868 (ITVKNATFTW…DGAFAEFLRT (225 aa)). An ATP-binding site is contributed by 678 to 685 (GQVGCGKS). The segment at 912–939 (RQLSSSSSYSRDVSQHHTSTAELRKPGP) is disordered. 2 positions are modified to phosphoserine: S915 and S930. Residues 967-987 (KAIGLFISFLSIFLFLCNHVA) traverse the membrane as a helical segment. Positions 974–1255 (SFLSIFLFLC…LVRMSSEMET (282 aa)) constitute an ABC transmembrane type-1 2 domain. At 988–1024 (SLVSNYWLSLWTDDPIVNGTQEHTQVRLSVYGALGIS) the chain is on the extracellular side. The N-linked (GlcNAc...) asparagine glycan is linked to N1005. The helical transmembrane segment at 1025-1045 (QGITVFGYSMAVSIGGIFASR) threads the bilayer. The Cytoplasmic segment spans residues 1046-1088 (RLHLDLLHNVLRSPISFFERTPSGNLVNRFSKELDTVDSMIPQ). A helical membrane pass occupies residues 1089–1109 (VIKMFMGSLFNVIGACIIILL). Position 1110 (A1110) is a topological domain, extracellular. Residues 1111 to 1131 (TPMAAVIIPPLGLIYFFVQRF) traverse the membrane as a helical segment. Residues 1132-1202 (YVASSRQLKR…VANRWLAVRL (71 aa)) are Cytoplasmic-facing. A helical membrane pass occupies residues 1203-1223 (ECVGNCIVLFASLFAVISRHS). Residues 1224–1225 (LS) are Extracellular-facing. A helical membrane pass occupies residues 1226–1246 (AGLVGLSVSYSLQVTTYLNWL). Residues 1247 to 1530 (VRMSSEMETN…YSMAKDSGLV (284 aa)) are Cytoplasmic-facing. The ABC transporter 2 domain occupies 1292–1526 (VEFRDYGLRY…RGLFYSMAKD (235 aa)). 1326–1333 (GRTGAGKS) contacts ATP.

This sequence belongs to the ABC transporter superfamily. ABCC family. Conjugate transporter (TC 3.A.1.208) subfamily. As to expression, expressed in heart, spleen, lung, kidney, skeletal muscle, mammary gland and weaker in brain and liver.

Its subcellular location is the cell membrane. The protein localises to the basolateral cell membrane. The catalysed reaction is ATP + H2O + xenobioticSide 1 = ADP + phosphate + xenobioticSide 2.. It catalyses the reaction an S-substituted glutathione(in) + ATP + H2O = an S-substituted glutathione(out) + ADP + phosphate + H(+). It carries out the reaction sphing-4-enine 1-phosphate(in) + ATP + H2O = sphing-4-enine 1-phosphate(out) + ADP + phosphate + H(+). The enzyme catalyses leukotriene C4(in) + ATP + H2O = leukotriene C4(out) + ADP + phosphate + H(+). The catalysed reaction is 17beta-estradiol 17-O-(beta-D-glucuronate)(in) + ATP + H2O = 17beta-estradiol 17-O-(beta-D-glucuronate)(out) + ADP + phosphate + H(+). It catalyses the reaction daunorubicin(in) + ATP + H2O = daunorubicin(out) + ADP + phosphate + H(+). It carries out the reaction vincristine(in) + ATP + H2O = vincristine(out) + ADP + phosphate + H(+). The enzyme catalyses 2',3'-cGAMP(in) + ATP + H2O = 2',3'-cGAMP(out) + ADP + phosphate + H(+). The catalysed reaction is S-[(2E,6E,10E)-geranylgeranyl]-L-glutathione(in) + ATP + H2O = S-[(2E,6E,10E)-geranylgeranyl]-L-glutathione(out) + ADP + phosphate + H(+). It catalyses the reaction prostaglandin A2-S-(R)-glutathione(in) + ATP + H2O = prostaglandin A2-S-(R)-glutathione(out) + ADP + phosphate + H(+). It carries out the reaction prostaglandin A2-S-(S)-glutathione(in) + ATP + H2O = prostaglandin A2-S-(S)-glutathione(out) + ADP + phosphate + H(+). MK 571 inhibits sphingosine 1-phosphate and leukotriene C4 export. In terms of biological role, mediates export of organic anions and drugs from the cytoplasm. Mediates ATP-dependent transport of glutathione and glutathione conjugates, leukotriene C4, estradiol-17-beta-o-glucuronide, methotrexate, antiviral drugs and other xenobiotics. Confers resistance to anticancer drugs by decreasing accumulation of drug in cells, and by mediating ATP- and GSH-dependent drug export. Hydrolyzes ATP with low efficiency. Catalyzes the export of sphingosine 1-phosphate from mast cells independently of their degranulation. Participates in inflammatory response by allowing export of leukotriene C4 from leukotriene C4-synthesizing cells. Mediates ATP-dependent, GSH-independent cyclic GMP-AMP (cGAMP) export. Thus, by limiting intracellular cGAMP concentrations negatively regulates the cGAS-STING pathway. Exports S-geranylgeranyl-glutathione (GGG) in lymphoid cells and stromal compartments of lymphoid organs. ABCC1 (via extracellular transport) with GGT5 (via GGG catabolism) establish GGG gradients within lymphoid tissues to position P2RY8-positive lymphocytes at germinal centers in lymphoid follicles and restrict their chemotactic transmigration from blood vessels to the bone marrow parenchyma. Mediates basolateral export of GSH-conjugated R- and S-prostaglandin A2 diastereomers in polarized epithelial cells. In Bos taurus (Bovine), this protein is Multidrug resistance-associated protein 1.